The chain runs to 353 residues: Histidinol-phosphate aminotransferase (353 aa).

The residue at position 209 (K209) is an N6-(pyridoxal phosphate)lysine.

Belongs to the class-II pyridoxal-phosphate-dependent aminotransferase family. Histidinol-phosphate aminotransferase subfamily. Homodimer. The cofactor is pyridoxal 5'-phosphate.

It catalyses the reaction L-histidinol phosphate + 2-oxoglutarate = 3-(imidazol-4-yl)-2-oxopropyl phosphate + L-glutamate. The protein operates within amino-acid biosynthesis; L-histidine biosynthesis; L-histidine from 5-phospho-alpha-D-ribose 1-diphosphate: step 7/9. This is Histidinol-phosphate aminotransferase from Buchnera aphidicola subsp. Cinara cedri (strain Cc).